A 441-amino-acid chain; its full sequence is Lysine histidine transporter-like 2 (441 aa).

At 1 to 32 the chain is on the cytoplasmic side; that stretch reads MEKSQSSPTKDASTKQKNVDDWLPITSSRNAK. Residues 33 to 53 traverse the membrane as a helical segment; the sequence is WWYSAFHNVTAMVGAGVLSLP. Topologically, residues 54–58 are extracellular; sequence YAMSN. The helical transmembrane segment at 59–79 threads the bilayer; that stretch reads LGWGPGVTIMIMSWLITFYTL. Residues 80–110 lie on the Cytoplasmic side of the membrane; it reads WQMVQMHEMVPGKRFDRYHELGQHAFGEKLG. Residues 111 to 131 form a helical membrane-spanning segment; it reads LWIVVPQQLIVEVGVDIVYMV. Residues 132 to 155 lie on the Extracellular side of the membrane; the sequence is TGGKSLKKIHDLLCTDCKNIRTTY. 2 helical membrane-spanning segments follow: residues 156–176 and 177–197; these read WIMI…FNSI and SIVS…AWAT. Over 198–222 the chain is Extracellular; the sequence is SVKKGVHPNVDYSSRASTTSGNVFN. A helical transmembrane segment spans residues 223–243; the sequence is FLNALGDVAFAYAGHNVVLEI. At 244–264 the chain is on the cytoplasmic side; the sequence is QATIPSTPEKPSKIAMWKGVV. A helical membrane pass occupies residues 265–285; the sequence is VAYIVVAICYFPVAFVCYYIF. Residues 286–300 are Extracellular-facing; the sequence is GNSVDDNILMTLEKP. Residues 301 to 321 form a helical membrane-spanning segment; that stretch reads IWLIAIANAFVVVHVIGSYQI. At 322-347 the chain is on the cytoplasmic side; the sequence is YAMPVFDMLETFLVKKMMFAPSFKLR. The chain crosses the membrane as a helical span at residues 348–370; sequence FITRTLYVAFTMFVAICIPFFGG. Topologically, residues 371 to 373 are extracellular; that stretch reads LLG. The chain crosses the membrane as a helical span at residues 374-396; it reads FFGGFAFAPTTYYLPCIMWLCIK. Over 397–406 the chain is Cytoplasmic; sequence KPKKYGLSWC. Residues 407 to 427 form a helical membrane-spanning segment; the sequence is INWFCIVVGVILTILAPIGGL. Topologically, residues 428–441 are extracellular; the sequence is RTIIISAKNYEFFS.

The protein belongs to the amino acid/polyamine transporter 2 family. Amino acid/auxin permease (AAAP) (TC 2.A.18.2) subfamily.

The protein resides in the cell membrane. In terms of biological role, amino acid transporter. The sequence is that of Lysine histidine transporter-like 2 from Arabidopsis thaliana (Mouse-ear cress).